The sequence spans 362 residues: Protein U8 (362 aa).

It belongs to the herpesviridae US22 family.

This is Protein U8 (U8) from Human herpesvirus 7 (strain JI) (HHV-7).